An 829-amino-acid polypeptide reads, in one-letter code: Transmembrane protease serine 7 (829 aa).

Over 1–62 (MDKEKSDPSC…RAPFWNVQNK (62 aa)) the chain is Cytoplasmic. The interval 26–52 (SVPGKLPGRRPPRKPIGKPRPRKQPKK) is disordered. The segment covering 32–52 (PGRRPPRKPIGKPRPRKQPKK) has biased composition (basic residues). The chain crosses the membrane as a helical; Signal-anchor for type II membrane protein span at residues 63-83 (IILFTVFLFILAVTAWTLLWL). Residues 84-829 (YISKTESKDA…WIHKYVPSLL (746 aa)) lie on the Extracellular side of the membrane. The SEA domain occupies 92 to 220 (DAFYFVGMFR…DSVVLNAGLR (129 aa)). Disulfide bonds link Cys-233-Cys-259, Cys-285-Cys-308, and Cys-351-Cys-382. CUB domains are found at residues 233–346 (CSRY…FEVI) and 351–467 (CEST…YNIS). N-linked (GlcNAc...) asparagine glycans are attached at residues Asn-401 and Asn-465. 3 LDL-receptor class A domains span residues 469 to 505 (PCPAGSFRCSSGLCVPQAQRCDGVNDCFDESDELFCV), 503 to 540 (FCVTVKPACNSSSFRQHGPLVCDGFRDCEDGQDEQNCT), and 544 to 581 (PCTSRTFKCGNDICFRKQNAQCDGIVDCPDGSDEEGCG). 9 disulfides stabilise this stretch: Cys-470-Cys-482, Cys-477-Cys-495, Cys-489-Cys-504, Cys-511-Cys-530, Cys-524-Cys-539, Cys-545-Cys-557, Cys-552-Cys-571, Cys-565-Cys-580, and Cys-617-Cys-633. The 235-residue stretch at 592–826 (IVGGSDSQEG…FVPWIHKYVP (235 aa)) folds into the Peptidase S1 domain. Residues His-632 and Asp-680 each act as charge relay system in the active site. 3 cysteine pairs are disulfide-bonded: Cys-716-Cys-782, Cys-748-Cys-761, and Cys-772-Cys-802. Ser-776 functions as the Charge relay system in the catalytic mechanism.

This sequence belongs to the peptidase S1 family. In terms of assembly, forms a heterodimer with SERPINA5. In terms of processing, N-glycosylated. In terms of tissue distribution, expressed in brain, eye, testis, skin, epididymis and salivary gland with lower levels in heart, skeletal muscle, thymus, ovary, prostate and uterus.

It localises to the cell membrane. Its function is as follows. Serine protease which preferentially hydrolyzes peptides with Arg at the P1 position. The polypeptide is Transmembrane protease serine 7 (Tmprss7) (Mus musculus (Mouse)).